Here is a 528-residue protein sequence, read N- to C-terminus: Ladinin-1 (528 aa).

The disordered stretch occupies residues 1 to 404; sequence MSVSRKDWSA…NSETPLTRSA (404 aa). Phosphoserine occurs at positions 38, 56, 62, 72, and 76. Over residues 88–97 the composition is skewed to basic residues; sequence RTRKERRQRR. Phosphoserine is present on S119. Positions 134–173 are enriched in basic and acidic residues; the sequence is KKVEALPRRRLSREQRGPWAQDEERLKNRELAEGEKRLPE. SEK repeat units lie at residues 184 to 186, 190 to 192, 202 to 204, and 208 to 210; these read SEK. The interval 184 to 281 is 6 X SEK repeats; that stretch reads SEKTPVSEKT…MQERKLVSEK (98 aa). Composition is skewed to basic and acidic residues over residues 218–231 and 267–279; these read SLTE…KLVP and IVSE…KLVS. SEK repeat units follow at residues 269–271 and 279–281; these read SEK. The span at 304 to 316 shows a compositional bias: polar residues; sequence EQPQTTGGSQATT. A phosphoserine mark is found at S328, S358, S367, S405, and S496. The span at 365 to 377 shows a compositional bias: low complexity; the sequence is TPSPTLLTYSSSL. Residues 492-528 form a disordered region; sequence KTQDSGDHGSQEVRKEASVTKRAQWGSKPSTSLDAEV. Residues 495–510 are compositionally biased toward basic and acidic residues; it reads DSGDHGSQEVRKEASV. Residues 518-528 show a composition bias toward polar residues; the sequence is SKPSTSLDAEV.

In terms of tissue distribution, expressed in kidney, lung and keratinocytes followed by liver, spleen and brain. Not expressed in testis, skeletal and heart muscle and in fibroblasts.

The protein resides in the secreted. It is found in the extracellular space. The protein localises to the extracellular matrix. It localises to the basement membrane. Anchoring filament protein which is a component of the basement membrane zone. This is Ladinin-1 (Lad1) from Mus musculus (Mouse).